A 540-amino-acid chain; its full sequence is Probable pectinesterase/pectinesterase inhibitor 60 (540 aa).

The first 31 residues, 1–31 (MNIMMVQNISFLSLHLLLILLLCLRPLTTVA), serve as a signal peptide directing secretion. The segment at 32–185 (DGNSTNIDGW…SHLISNCLAV (154 aa)) is pectinesterase inhibitor 60. N-linked (GlcNAc...) asparagine glycans are attached at residues Asn34, Asn91, Asn95, Asn120, Asn161, and Asn195. The tract at residues 225-526 (NLVVAKDGSG…FSVGKFIAGT (302 aa)) is pectinesterase 60. Residues Thr302 and Gln332 each coordinate substrate. Residue Asp355 is the Proton donor; for pectinesterase activity of the active site. Residues Cys369 and Cys389 are joined by a disulfide bond. Asp376 (nucleophile; for pectinesterase activity) is an active-site residue. Substrate-binding residues include Arg444 and Trp446.

This sequence in the N-terminal section; belongs to the PMEI family. In the C-terminal section; belongs to the pectinesterase family. In terms of tissue distribution, expressed in siliques.

It is found in the secreted. The protein localises to the cell wall. It catalyses the reaction [(1-&gt;4)-alpha-D-galacturonosyl methyl ester](n) + n H2O = [(1-&gt;4)-alpha-D-galacturonosyl](n) + n methanol + n H(+). It functions in the pathway glycan metabolism; pectin degradation; 2-dehydro-3-deoxy-D-gluconate from pectin: step 1/5. Its function is as follows. Acts in the modification of cell walls via demethylesterification of cell wall pectin. The polypeptide is Probable pectinesterase/pectinesterase inhibitor 60 (PME60) (Arabidopsis thaliana (Mouse-ear cress)).